The sequence spans 121 residues: Large ribosomal subunit protein uL14 (121 aa).

Belongs to the universal ribosomal protein uL14 family. Part of the 50S ribosomal subunit. Forms a cluster with proteins L3 and L19. In the 70S ribosome, L14 and L19 interact and together make contacts with the 16S rRNA in bridges B5 and B8.

In terms of biological role, binds to 23S rRNA. Forms part of two intersubunit bridges in the 70S ribosome. In Aquifex pyrophilus, this protein is Large ribosomal subunit protein uL14.